We begin with the raw amino-acid sequence, 85 residues long: Acyl carrier protein (85 aa).

Residues 2–78 form the Carrier domain; sequence SQISERVIDL…DAIAYIESHA (77 aa). Serine 37 is subject to O-(pantetheine 4'-phosphoryl)serine.

The protein belongs to the acyl carrier protein (ACP) family. Post-translationally, 4'-phosphopantetheine is transferred from CoA to a specific serine of apo-ACP by AcpS. This modification is essential for activity because fatty acids are bound in thioester linkage to the sulfhydryl of the prosthetic group.

The protein resides in the cytoplasm. It participates in lipid metabolism; fatty acid biosynthesis. In terms of biological role, carrier of the growing fatty acid chain in fatty acid biosynthesis. The chain is Acyl carrier protein from Azobacteroides pseudotrichonymphae genomovar. CFP2.